A 3491-amino-acid polypeptide reads, in one-letter code: Erythronolide synthase EryA1 (3491 aa).

A loading domain region spans residues 1–484; the sequence is MSGPRSRTTS…TPRALAEALA (484 aa). Residues 57-372 form an acyltransferase 1 region; it reads VFVFPGQGAQ…AAQAFTGGVA (316 aa). Catalysis depends on S145, which acts as the Acyl-ester intermediate; for acyltransferase 1 activity. The tract at residues 386–410 is disordered; sequence PALCRSSRRPRRKTSRPSPASTGTR. A compositionally biased stretch (basic residues) spans 391 to 400; sequence SSRRPRRKTS. A Carrier 1 domain is found at 412 to 487; sequence RTCCERLLAV…ALAEALAAGT (76 aa). S447 carries the post-translational modification O-(pantetheine 4'-phosphoryl)serine. The region spanning 504–928 is the Ketosynthase family 3 (KS3) 1 domain; it reads GEPVAVVAMA…GTNAHAIIEE (425 aa). Module stretches follow at residues 507-1958 and 1982-3404; these read VAVV…AHLA and IAIV…GFLD. The active-site Acyl-thioester intermediate; for beta-ketoacyl synthase 1 activity is the C677. Residues H812 and H850 each act as for beta-ketoacyl synthase 1 activity in the active site. The tract at residues 1031-1352 is acyltransferase 2; the sequence is VFVFPGQGWQ…ALSRAFAAGV (322 aa). The active-site Acyl-ester intermediate; for acyltransferase 2 activity is S1128. Residues 1613–1790 form a beta-ketoacyl reductase 1 region; the sequence is GTVLVTGGTG…ATAVAWGTWA (178 aa). NADP(+) is bound by residues 1621–1624, 1644–1647, 1673–1674, K1723, and 1745–1746; these read TGGV, SRSG, DV, and FS. Residue Y1760 is the For beta-ketoacyl reductase 1 activity of the active site. Residues 1886–1961 form the Carrier 2 domain; it reads EALFELVRSH…TLAAHLAAEL (76 aa). O-(pantetheine 4'-phosphoryl)serine is present on S1921. In terms of domain architecture, Ketosynthase family 3 (KS3) 2 spans 1979-2402; it reads DEPIAIVGMA…GTNAHVIIAE (424 aa). Catalysis depends on C2148, which acts as the Acyl-thioester intermediate; for beta-ketoacyl synthase 2 activity. Catalysis depends on for beta-ketoacyl synthase 2 activity residues H2283 and H2323. An acyltransferase 3 region spans residues 2508-2827; sequence VFVFPGQGAQ…LADAHTRGVA (320 aa). S2598 (acyl-ester intermediate; for acyltransferase 3 activity) is an active-site residue. The tract at residues 3057–3233 is beta-ketoacyl reductase 2; that stretch reads GTILVTGGTA…ATSVAWGLWA (177 aa). NADP(+)-binding positions include 3065-3068, 3088-3091, 3117-3118, K3168, and 3188-3189; these read TAGL, SRRG, DV, and FS. Y3203 (for beta-ketoacyl reductase 2 activity) is an active-site residue. The Carrier 3 domain occupies 3329-3407; the sequence is ERTAELVRLV…AVAGFLDAEL (79 aa). S3367 is modified (O-(pantetheine 4'-phosphoryl)serine). The segment at 3456–3491 is disordered; the sequence is QAADASGTGANPSGDDLGEAGVDELLEALGRELDGD. The span at 3471–3481 shows a compositional bias: acidic residues; that stretch reads DLGEAGVDELL.

In terms of assembly, homodimer. Erythronolide synthase is composed of EryAI, EryAII and EryAIII multimodular (2 modules) polypeptides each coding for a functional synthase subunit which participates in 2 of the six FAS-like elongation steps required for formation of the polyketide. Module 1, 2, 3, 4, 5, and 6 participating in biosynthesis steps 1, 2, 3, 4, 5, and 6, respectively. Pantetheine 4'-phosphate serves as cofactor.

The enzyme catalyses 6 (S)-methylmalonyl-CoA + propanoyl-CoA + 6 NADPH + 12 H(+) = 6-deoxyerythronolide B + 6 CO2 + 6 NADP(+) + 7 CoA + H2O. It functions in the pathway antibiotic biosynthesis; erythromycin biosynthesis. Functionally, involved in the biosynthesis of antibiotic erythromycin via the biosynthesis of its aglycone precursor, 6-deoxyerythronolide B (6-dEB). This is Erythronolide synthase EryA1 (eryA) from Saccharopolyspora erythraea (Streptomyces erythraeus).